The sequence spans 293 residues: MFSGSIPALATPFRDGAFDEATFRRLVDWQIESGSSALVPCGTTGEASTLSNAEHHRVIEVCIEQAAGRVPVIAGCGSNDTRNALLHMNFSKKAGAAAGLCVAPYYNRPSQAGLIAHFSFLAENSDLPIVLYNVPSRTVTDIEDETVVELVTKYPDRIVAIKDASGDLSRVADHRMGIGRDFCQLSGNDELWLPHSAAGGSGAISVTANVAPALCAEFHSAIAANELARARELNDRLFPLHYAMFSDASPAPVKYALSRVMEEFTDEVRLPIVSASEASRKAVDEALEHAGLI.

Threonine 44 lines the pyruvate pocket. Tyrosine 132 acts as the Proton donor/acceptor in catalysis. Lysine 162 serves as the catalytic Schiff-base intermediate with substrate. Residue isoleucine 204 coordinates pyruvate.

Belongs to the DapA family. In terms of assembly, homotetramer; dimer of dimers.

It localises to the cytoplasm. The enzyme catalyses L-aspartate 4-semialdehyde + pyruvate = (2S,4S)-4-hydroxy-2,3,4,5-tetrahydrodipicolinate + H2O + H(+). Its pathway is amino-acid biosynthesis; L-lysine biosynthesis via DAP pathway; (S)-tetrahydrodipicolinate from L-aspartate: step 3/4. Its function is as follows. Catalyzes the condensation of (S)-aspartate-beta-semialdehyde [(S)-ASA] and pyruvate to 4-hydroxy-tetrahydrodipicolinate (HTPA). The sequence is that of 4-hydroxy-tetrahydrodipicolinate synthase from Erythrobacter litoralis (strain HTCC2594).